The following is a 462-amino-acid chain: Sugar transporter ERD6-like 2 (462 aa).

12 helical membrane passes run 23 to 43, 70 to 90, 96 to 116, 123 to 143, 156 to 176, 178 to 198, 261 to 281, 296 to 316, 324 to 344, 357 to 377, 397 to 417, and 423 to 443; these read SGLLLSTSVVVAGSFCYGCAM, VMTLGGMITAVFSGKISALVG, WISDVCCIFGWLAVAFAHDII, LFLGFGVGLISYVVPVYIAEI, NQLLQCLGISLMFFTGNFFHW, TLALLSAIPSAFQVICLFFIP, LIIGLGLMLLQQFCGSAAISA, IGTTILAVILIPQSIVVMLTV, LLMISSIGMCICSFFIGLSYY, VMLIVGLVGYVSSFGIGLGGL, LVTMSNWFFNWIIIYSFNFMI, and GTYFIFSGVSLVTIVFIWTLV.

This sequence belongs to the major facilitator superfamily. Sugar transporter (TC 2.A.1.1) family.

The protein resides in the membrane. Its function is as follows. Sugar transporter. The protein is Sugar transporter ERD6-like 2 (SUGTL3) of Arabidopsis thaliana (Mouse-ear cress).